Consider the following 191-residue polypeptide: dCTP deaminase (191 aa).

Residues 112–117, 136–138, glutamine 157, tyrosine 173, and glutamine 183 each bind dCTP; these read KSTYAR and TLE. Glutamate 138 acts as the Proton donor/acceptor in catalysis.

This sequence belongs to the dCTP deaminase family. As to quaternary structure, homotrimer.

It catalyses the reaction dCTP + H2O + H(+) = dUTP + NH4(+). The protein operates within pyrimidine metabolism; dUMP biosynthesis; dUMP from dCTP (dUTP route): step 1/2. Catalyzes the deamination of dCTP to dUTP. This chain is dCTP deaminase, found in Psychrobacter cryohalolentis (strain ATCC BAA-1226 / DSM 17306 / VKM B-2378 / K5).